Reading from the N-terminus, the 505-residue chain is MFS efflux pump atnC (505 aa).

12 consecutive transmembrane segments (helical) span residues 48-68, 117-137, 148-168, 181-201, 216-236, 240-260, 304-324, 343-363, 377-399, 403-425, 439-459, and 469-489; these read VLQV…GLTV, LIGW…IPYG, VLLL…LVCW, LFQC…ATIA, LQAT…VLMA, WTPC…LIAL, VAGL…LDFL, LSLR…LLLF, LLIA…LSPT, AILV…ASLW, TVAI…SLMY, and WVGL…GVLL.

This sequence belongs to the major facilitator superfamily.

The protein resides in the membrane. It functions in the pathway secondary metabolite biosynthesis. In terms of biological role, MFS efflux pump; part of the gene cluster that mediates the biosynthesis of aspercryptins, linear lipopeptides built from six amino acids including 2 highly unusual and nonproteogenic amino acids, 2-amino-octanoic acid (2aoa) and 2-amino-dodecanol (2adol). This chain is MFS efflux pump atnC, found in Emericella nidulans (strain FGSC A4 / ATCC 38163 / CBS 112.46 / NRRL 194 / M139) (Aspergillus nidulans).